Reading from the N-terminus, the 543-residue chain is MSAVSYSMHRTTTTTSSSSHGGVSAGHAAEEFVASAEREKQEMQQLNSRLEVYISRVRQLEDRNKELVIELDTLRGSLGNDIGQIKFKFNDSLVKVRREISEAHSGTIGVEVKVDRLRDDLNDYRHRYEEARREVEREKTTWGGAISQAQAELDTNKSRYAAILDEEKRLYAEQDQLYLQLAAAKDELDAAIVDRRRLQAEEDDLKIELEFLGRIHSQEITELRTLLAQAPADTREFFKNELALAIREIKAEYDKIIQTTRVDLETIFQSKISAVESSIVSKNEAAVFRQEEIRKMNESITTLRAKLSELEARNSALEREANTLQIQLGEDQRAYESELHKRDNALRFMREDCQTLIAELQALLNTKQTLDTEIAIYRKLVESEEGRFTHVGQGVVVAQQETTRLVPVEQDHWDSGEVQTRSSFKRHAKGNVSIVECDPQGKYIILENTSGSVAEDVSNFEIRRVIDGVQAFVFRLPSHLVIQQHGHLKIYGRNSGGINSPPDSIVMESHPSWGQGGQVETFLYNSHGIEKASHIQTTVASSR.

The segment covering 1-10 (MSAVSYSMHR) has biased composition (polar residues). Residues 1 to 27 (MSAVSYSMHRTTTTTSSSSHGGVSAGH) form a disordered region. The segment at 1–42 (MSAVSYSMHRTTTTTSSSSHGGVSAGHAAEEFVASAEREKQE) is head. The IF rod domain occupies 39–388 (EKQEMQQLNS…KLVESEEGRF (350 aa)). The interval 43–74 (MQQLNSRLEVYISRVRQLEDRNKELVIELDTL) is coil 1A. A linker 1 region spans residues 75-88 (RGSLGNDIGQIKFK). The coil 1B stretch occupies residues 89–223 (FNDSLVKVRR…RIHSQEITEL (135 aa)). The interval 224–240 (RTLLAQAPADTREFFKN) is linker 12. Positions 241-387 (ELALAIREIK…RKLVESEEGR (147 aa)) are coil 2. The interval 388-542 (FTHVGQGVVV…SHIQTTVASS (155 aa)) is tail. One can recognise an LTD domain in the interval 420–538 (TRSSFKRHAK…IEKASHIQTT (119 aa)).

This sequence belongs to the intermediate filament family. In terms of tissue distribution, expression is restricted to a discrete circumferential subapical layer within the intestinal terminal web (known as the 'endotube'); this layer joins directly to the apical junction complexes that connect adjacent gut cells.

It is found in the cytoplasm. Functionally, cytoplasmic intermediate filaments provide mechanical strength to cells. Not essential protein. Component of the terminal web (organelle-depleted, intermediate filament-rich layer of cytoplasm that underlies the apical microvilli of polarized epithelial cells) in embryonic through to adult gut cells. Correct localization of filaments requires let-413. In Caenorhabditis elegans, this protein is Intermediate filament protein ifb-2 (ifb-2).